The chain runs to 776 residues: Ent-8-alpha-hydroxylabd-13-en-15-yl diphosphate synthase CPS4, chloroplastic (776 aa).

A chloroplast-targeting transit peptide spans 1–60 (MSFASNATGFRIPLTTCVYPSPILRFNAKVGSGSSYGTTEAQRNMKCVDGIGRSRVVAVA). K226 is a binding site for substrate. Residues D357 and D359 each contribute to the Mg(2+) site. The short motif at 357-360 (DSDD) is the DXDD motif element. Substrate is bound at residue K443.

This sequence belongs to the terpene synthase family. Mg(2+) is required as a cofactor.

The protein localises to the plastid. It is found in the chloroplast. The enzyme catalyses ent-8alpha-hydroxylabd-13-en-15-yl diphosphate = (2E,6E,10E)-geranylgeranyl diphosphate + H2O. The protein operates within secondary metabolite biosynthesis; terpenoid biosynthesis. In terms of biological role, involved in diterpenoid biosynthesis. Catalyzes the conversion of all-trans-geranylgeranyl diphosphate to ent-8alpha-hydroxylabd-13-en-15-yl diphosphate. The protein is Ent-8-alpha-hydroxylabd-13-en-15-yl diphosphate synthase CPS4, chloroplastic of Salvia miltiorrhiza (Chinese sage).